A 484-amino-acid polypeptide reads, in one-letter code: Threonine synthase-like 2 (484 aa).

Lys-113 carries the N6-(pyridoxal phosphate)lysine modification.

Belongs to the threonine synthase family. Requires pyridoxal 5'-phosphate as cofactor.

Its subcellular location is the secreted. In terms of biological role, acts as a catabolic phospho-lyase on both gamma- and beta-phosphorylated substrates. Degrades O-phospho-threonine (PThr) to alpha-ketobutyrate, ammonia and phosphate. Its function is as follows. Potent inducer of osteoblastic production of IL6. May act to exacerbate inflammation and/or bone turnover under inflammatory conditions. This is Threonine synthase-like 2 (THNSL2) from Homo sapiens (Human).